The sequence spans 170 residues: Large ribosomal subunit protein uL16 (170 aa).

Belongs to the universal ribosomal protein uL16 family.

The polypeptide is Large ribosomal subunit protein uL16 (Methanoculleus marisnigri (strain ATCC 35101 / DSM 1498 / JR1)).